The following is a 351-amino-acid chain: D-alanine--D-alanine ligase (351 aa).

An ATP-grasp domain is found at 135–343; sequence NQIFLQSGQK…MEEVFSDLIE (209 aa). Position 167 to 222 (167 to 222) interacts with ATP; sequence LETLGFPQFLKPVEGGSSVSVYKITNREQLKEKLALIFESDSKVMSQSFLTGIEVS. Mg(2+) is bound by residues Asp298, Glu310, and Asn312.

The protein belongs to the D-alanine--D-alanine ligase family. The cofactor is Mg(2+). Mn(2+) serves as cofactor.

The protein localises to the cytoplasm. It carries out the reaction 2 D-alanine + ATP = D-alanyl-D-alanine + ADP + phosphate + H(+). Its pathway is cell wall biogenesis; peptidoglycan biosynthesis. Functionally, cell wall formation. This Leptospira interrogans serogroup Icterohaemorrhagiae serovar Lai (strain 56601) protein is D-alanine--D-alanine ligase.